Consider the following 554-residue polypeptide: 3-(3-hydroxy-phenyl)propionate/3-hydroxycinnamic acid hydroxylase (554 aa).

Residues 17–46 (QVAI…VVEK) and 285–295 (FRIDRVLLAGD) contribute to the FAD site.

The protein belongs to the PheA/TfdB FAD monooxygenase family. The cofactor is FAD.

The enzyme catalyses 3-(3-hydroxyphenyl)propanoate + NADH + O2 + H(+) = 3-(2,3-dihydroxyphenyl)propanoate + NAD(+) + H2O. It catalyses the reaction (2E)-3-(3-hydroxyphenyl)prop-2-enoate + NADH + O2 + H(+) = (2E)-3-(2,3-dihydroxyphenyl)prop-2-enoate + NAD(+) + H2O. It functions in the pathway aromatic compound metabolism; 3-phenylpropanoate degradation. Functionally, catalyzes the insertion of one atom of molecular oxygen into position 2 of the phenyl ring of 3-(3-hydroxyphenyl)propionate (3-HPP) and hydroxycinnamic acid (3HCI). The protein is 3-(3-hydroxy-phenyl)propionate/3-hydroxycinnamic acid hydroxylase of Escherichia coli O81 (strain ED1a).